We begin with the raw amino-acid sequence, 950 residues long: Voltage-gated inwardly rectifying potassium channel KCNH6 (950 aa).

At 1–261 (MPVRRGHVAP…YSPFKAVWDW (261 aa)) the chain is on the cytoplasmic side. One can recognise a PAS domain in the interval 41–70 (IIYCNDGFCELFGYSRVEVMQRPCTCDFLT). The PAC domain maps to 92–144 (CKVDILYYRKDASSFRCLVDVVPVKNEDGAVIMFILNFEDLAQLLAKSSSRSL). The disordered stretch occupies residues 154-174 (LGSEGSHSRPSGQGPGPGRGK). Residues 262-282 (LILLLVIYTAVFTPYSAAFLL) form a helical membrane-spanning segment. The Extracellular portion of the chain corresponds to 283–298 (SDQDESQRGTCGYTCS). Residues 299 to 319 (PLTVVDLIVDIMFVVDIVINF) traverse the membrane as a helical segment. Over 320 to 340 (RTTYVNTNDEVVSHPRRIAVH) the chain is Cytoplasmic. Residues 341 to 361 (YFKGWFLIDMVAAIPFDLLIF) traverse the membrane as a helical segment. Over 362–370 (RTGSDETTT) the chain is Extracellular. Residues 371 to 391 (LIGLLKTARLLRLVRVARKLD) traverse the membrane as a helical; Voltage-sensor segment. The Cytoplasmic segment spans residues 392–398 (RYSEYGA). The helical transmembrane segment at 399–419 (AVLFLLMCTFALIAHWLACIW) threads the bilayer. Residues 420 to 463 (YAIGNVERPYLEPKIGWLDSLGAQLGKQYNGSDPASGPSVQDKY) lie on the Extracellular side of the membrane. The pore-forming intramembrane region spans 464 to 484 (VTALYFTFSSLTSVGFGNVSP). Residues 476-481 (SVGFGN) carry the Selectivity filter motif. Residues 485-490 (NTNSEK) are Extracellular-facing. Residues 491 to 511 (VFSICVMLIGSLMYASIFGNV) form a helical membrane-spanning segment. Topologically, residues 512-950 (SAIIQRLYSG…HGSDPGFTRS (439 aa)) are cytoplasmic. Positions 594–694 (AFRGASKGCL…IHRADLLEVL (101 aa)) are cNMP-binding domain. Disordered regions lie at residues 719–750 (GGLQ…APSL) and 890–950 (VPSS…FTRS). Positions 740-750 (NDSQSGAAPSL) are enriched in polar residues. The segment covering 898-912 (PGGLLSPLASPLRPL) has biased composition (low complexity).

It belongs to the potassium channel family. H (Eag) (TC 1.A.1.20) subfamily. Kv11.2/KCNH6 sub-subfamily. In terms of assembly, the potassium channel is probably composed of a homo- or heterotetrameric complex of pore-forming alpha subunits that can associate only within their subfamily. As to expression, highly expressed in celiac and superior mesenteric ganglia, but not detected in brain or in heart. Detected at low levels in retina. Also found in pituitary. Also found in the olfactory bulb (granular and mitral cell layers).

It localises to the cell membrane. It catalyses the reaction K(+)(in) = K(+)(out). Pore-forming (alpha) subunit of voltage-gated inwardly rectifying potassium channel. Characterized by unusual gating kinetics by producing relatively small outward currents during membrane depolarization and large inward currents during subsequent repolarization which reflect a rapid inactivation during depolarization and quick recovery from inactivation but slow deactivation (closing) during repolarization. Activates even more slowly than KCNH2. This chain is Voltage-gated inwardly rectifying potassium channel KCNH6, found in Rattus norvegicus (Rat).